The following is a 126-amino-acid chain: Small ribosomal subunit protein uS13 (126 aa).

Residues 95–126 (GLPVRGQRTRTNARTRKGPRKTVAGKKKAPRK) form a disordered region.

It belongs to the universal ribosomal protein uS13 family. In terms of assembly, part of the 30S ribosomal subunit. Forms a loose heterodimer with protein S19. Forms two bridges to the 50S subunit in the 70S ribosome.

In terms of biological role, located at the top of the head of the 30S subunit, it contacts several helices of the 16S rRNA. In the 70S ribosome it contacts the 23S rRNA (bridge B1a) and protein L5 of the 50S subunit (bridge B1b), connecting the 2 subunits; these bridges are implicated in subunit movement. Contacts the tRNAs in the A and P-sites. This Thermus thermophilus (strain ATCC BAA-163 / DSM 7039 / HB27) protein is Small ribosomal subunit protein uS13 (rpsM).